The sequence spans 292 residues: Peroxisomal 2,4-dienoyl-CoA reductase [(3E)-enoyl-CoA-producing] (292 aa).

An N-acetylalanine modification is found at Ala-2. Residues 35–40, 60–64, and Asp-86 each bind NADP(+); these read GGGSGI and RSLQK. Arg-60 serves as a coordination point for substrate. Lys-64 bears the N6-acetyllysine mark. Substrate-binding positions include Arg-88, Phe-118, and 126–128; that span reads SFN. At Lys-151 the chain carries N6-acetyllysine. Residues Lys-182 and 208–214 each bind NADP(+); that span reads PGAISGT. Residue Arg-219 coordinates substrate. Ser-287 is modified (phosphoserine). A Microbody targeting signal motif is present at residues 290–292; sequence AKL. Lys-291 carries the post-translational modification N6-acetyllysine.

This sequence belongs to the short-chain dehydrogenases/reductases (SDR) family. 2,4-dienoyl-CoA reductase subfamily. As to quaternary structure, monomer, dimer and oligomer.

The protein localises to the peroxisome. It catalyses the reaction a (2E,4Z)-dienoyl-CoA + NADPH + H(+) = a 4,5-saturated-(3E)-enoyl-CoA + NADP(+). The enzyme catalyses a (2E,4E)-dienoyl-CoA + NADPH + H(+) = a 4,5-saturated-(3E)-enoyl-CoA + NADP(+). It carries out the reaction (2E,4E)-hexadienoyl-CoA + NADPH + H(+) = (3E)-hexenoyl-CoA + NADP(+). The catalysed reaction is (2E,4E)-decadienoyl-CoA + NADPH + H(+) = (3E)-decenoyl-CoA + NADP(+). It catalyses the reaction (2E,4Z,7Z,10Z,13Z,16Z,19Z)-docosaheptaenoyl-CoA + NADPH + H(+) = (3E,7Z,10Z,13Z,16Z,19Z)-docosahexaenoyl-CoA + NADP(+). Functionally, auxiliary enzyme of beta-oxidation. Participates in the degradation of unsaturated fatty enoyl-CoA esters having double bonds in both even- and odd-numbered positions in peroxisome. Catalyzes the NADP-dependent reduction of 2,4-dienoyl-CoA to yield trans-3-enoyl-CoA. Has activity towards short and medium chain 2,4-dienoyl-CoAs, but also towards 2,4,7,10,13,16,19-docosaheptaenoyl-CoA, suggesting that it does not constitute a rate limiting step in the peroxisomal degradation of docosahexaenoic acid. The protein is Peroxisomal 2,4-dienoyl-CoA reductase [(3E)-enoyl-CoA-producing] (Decr2) of Mus musculus (Mouse).